The following is a 517-amino-acid chain: Crotonobetaine/carnitine--CoA ligase (517 aa).

This sequence belongs to the ATP-dependent AMP-binding enzyme family.

It carries out the reaction 4-(trimethylamino)butanoate + ATP + CoA = 4-(trimethylamino)butanoyl-CoA + AMP + diphosphate. It catalyses the reaction crotonobetaine + ATP + CoA = crotonobetainyl-CoA + AMP + diphosphate. The enzyme catalyses (R)-carnitine + ATP + CoA = (R)-carnitinyl-CoA + AMP + diphosphate. The protein operates within amine and polyamine metabolism; carnitine metabolism. Catalyzes the transfer of CoA to carnitine, generating the initial carnitinyl-CoA needed for the CaiB reaction cycle. Also has activity toward crotonobetaine and gamma-butyrobetaine. This chain is Crotonobetaine/carnitine--CoA ligase, found in Escherichia fergusonii (strain ATCC 35469 / DSM 13698 / CCUG 18766 / IAM 14443 / JCM 21226 / LMG 7866 / NBRC 102419 / NCTC 12128 / CDC 0568-73).